The following is a 587-amino-acid chain: Urease subunit alpha (587 aa).

One can recognise a Urease domain in the interval 134–572 (GGIDTHVHFI…LPLAQRYLYT (439 aa)). The Ni(2+) site is built by His-139, His-141, and Lys-222. An N6-carboxylysine modification is found at Lys-222. His-224 is a substrate binding site. His-251 and His-277 together coordinate Ni(2+). His-325 acts as the Proton donor in catalysis. Ni(2+) is bound at residue Asp-365.

It belongs to the metallo-dependent hydrolases superfamily. Urease alpha subunit family. As to quaternary structure, heterotrimer of UreA (gamma), UreB (beta) and UreC (alpha) subunits. Three heterotrimers associate to form the active enzyme. Requires Ni cation as cofactor. Post-translationally, carboxylation allows a single lysine to coordinate two nickel ions.

It is found in the cytoplasm. The enzyme catalyses urea + 2 H2O + H(+) = hydrogencarbonate + 2 NH4(+). Its pathway is nitrogen metabolism; urea degradation; CO(2) and NH(3) from urea (urease route): step 1/1. In Clostridium perfringens, this protein is Urease subunit alpha.